An 87-amino-acid chain; its full sequence is U3-theraphotoxin-Hhn1a 5 (87 aa).

A signal peptide spans 1–24 (MVNMKASMFLTFAGLVLLFVVCYA). Positions 25 to 52 (SESEEKEFPKEMLSSIFAVDNDFKQEER) are excised as a propeptide. 3 cysteine pairs are disulfide-bonded: Cys54–Cys67, Cys61–Cys72, and Cys66–Cys79.

This sequence belongs to the neurotoxin 10 (Hwtx-1) family. 51 (Hntx-8) subfamily. Hntx-8 sub-subfamily. Expressed by the venom gland.

The protein localises to the secreted. In terms of biological role, ion channel inhibitor. This Cyriopagopus hainanus (Chinese bird spider) protein is U3-theraphotoxin-Hhn1a 5.